The following is a 391-amino-acid chain: DNA polymerase IV (391 aa).

In terms of domain architecture, UmuC spans 6 to 187 (IIHVDMDAFF…LPVEMLWGVG (182 aa)). 2 residues coordinate Mg(2+): Asp-10 and Asp-105. The active site involves Glu-106.

The protein belongs to the DNA polymerase type-Y family. In terms of assembly, monomer. Mg(2+) serves as cofactor.

It localises to the cytoplasm. It catalyses the reaction DNA(n) + a 2'-deoxyribonucleoside 5'-triphosphate = DNA(n+1) + diphosphate. Functionally, poorly processive, error-prone DNA polymerase involved in untargeted mutagenesis. Copies undamaged DNA at stalled replication forks, which arise in vivo from mismatched or misaligned primer ends. These misaligned primers can be extended by PolIV. Exhibits no 3'-5' exonuclease (proofreading) activity. May be involved in translesional synthesis, in conjunction with the beta clamp from PolIII. The chain is DNA polymerase IV from Carboxydothermus hydrogenoformans (strain ATCC BAA-161 / DSM 6008 / Z-2901).